Reading from the N-terminus, the 206-residue chain is Holliday junction branch migration complex subunit RuvA (206 aa).

The segment at 1 to 63 (MIASLRGTVI…EDAMKLYGFI (63 aa)) is domain I. The domain II stretch occupies residues 64 to 142 (DNESREMFSV…AFAAGVVDEG (79 aa)). The tract at residues 143-153 (GEQISLPNANI) is flexible linker. The interval 154–206 (ASEVVVEQVSQALVGLGFSEKQSDDAVSFVLAADPSLDTSGALRAALAKLSGK) is domain III.

Belongs to the RuvA family. As to quaternary structure, homotetramer. Forms an RuvA(8)-RuvB(12)-Holliday junction (HJ) complex. HJ DNA is sandwiched between 2 RuvA tetramers; dsDNA enters through RuvA and exits via RuvB. An RuvB hexamer assembles on each DNA strand where it exits the tetramer. Each RuvB hexamer is contacted by two RuvA subunits (via domain III) on 2 adjacent RuvB subunits; this complex drives branch migration. In the full resolvosome a probable DNA-RuvA(4)-RuvB(12)-RuvC(2) complex forms which resolves the HJ.

Its subcellular location is the cytoplasm. Its function is as follows. The RuvA-RuvB-RuvC complex processes Holliday junction (HJ) DNA during genetic recombination and DNA repair, while the RuvA-RuvB complex plays an important role in the rescue of blocked DNA replication forks via replication fork reversal (RFR). RuvA specifically binds to HJ cruciform DNA, conferring on it an open structure. The RuvB hexamer acts as an ATP-dependent pump, pulling dsDNA into and through the RuvAB complex. HJ branch migration allows RuvC to scan DNA until it finds its consensus sequence, where it cleaves and resolves the cruciform DNA. This chain is Holliday junction branch migration complex subunit RuvA, found in Corynebacterium glutamicum (strain ATCC 13032 / DSM 20300 / JCM 1318 / BCRC 11384 / CCUG 27702 / LMG 3730 / NBRC 12168 / NCIMB 10025 / NRRL B-2784 / 534).